A 633-amino-acid polypeptide reads, in one-letter code: DNA mismatch repair protein MutL (633 aa).

Disordered stretches follow at residues 337-364 (RPDDQLAPPGATSLTEPRPTGAAAGEFG) and 383-405 (VGWSGGSSASGGSSGYSAYTRPE). Over residues 385-396 (WSGGSSASGGSS) the composition is skewed to gly residues.

Belongs to the DNA mismatch repair MutL/HexB family.

Functionally, this protein is involved in the repair of mismatches in DNA. It is required for dam-dependent methyl-directed DNA mismatch repair. May act as a 'molecular matchmaker', a protein that promotes the formation of a stable complex between two or more DNA-binding proteins in an ATP-dependent manner without itself being part of a final effector complex. In Pseudomonas aeruginosa (strain UCBPP-PA14), this protein is DNA mismatch repair protein MutL.